Reading from the N-terminus, the 614-residue chain is MFDKSRLNTLPESPGVYLMKGSDGTILYVGKAKSLRKRVRSYFGAAGESRYHIRFLVARVAEVEVIVTDTEKEALILENTLIKKHRPRYNLDLRDDKTYFSLRMDMNEEFPRLTIIRKVRQDGARYFGPYSSAASAREALKQLYRLFPLRHYPLETCRRRRRPCLFYQLRQCSAPCHGLISPEEYQGLVQGAALFLDGKNRDLLKTYRERMASAAANERYEEAARYRDLIRAIEVTVEKQKMVTTGGDADVLGIHREGSSLSLALLFIRGGRLIGSRSYLLAWELEDEEAVSSFLNDYYSREVFIPDEVLVPLPVADSAALAELLSERRGKRTSVAHPQRGTKAGLVKLAGKNAEAALREKQKREEGAEAVLTELKERLHLRNLPRCIECYDISNIQGTYPVGSRVSFRDGKADKGGYRHYRIKTVAGADDFAMMHEVLSRRFRDSPAKDEHPDLIVVDGGIGQLNILTAVLRELQVEDVDAASLAKSRVERDMAAEELTRSTERVFLPGRKNPVILRQNSAPLLLLARIRDEAHRFAITYHQKLRGKDTIRSILDTIPGIGPKRRKELLRQFGSLRRIREASRDELAATPTIPPTLAESIWKSLHENDEGDTP.

Residues 12–91 (ESPGVYLMKG…IKKHRPRYNL (80 aa)) form the GIY-YIG domain. The UVR domain occupies 201–236 (RDLLKTYRERMASAAANERYEEAARYRDLIRAIEVT).

It belongs to the UvrC family. In terms of assembly, interacts with UvrB in an incision complex.

It localises to the cytoplasm. The UvrABC repair system catalyzes the recognition and processing of DNA lesions. UvrC both incises the 5' and 3' sides of the lesion. The N-terminal half is responsible for the 3' incision and the C-terminal half is responsible for the 5' incision. The protein is UvrABC system protein C of Geobacter metallireducens (strain ATCC 53774 / DSM 7210 / GS-15).